The following is a 457-amino-acid chain: F-box/LRR-repeat protein At3g62440 (457 aa).

The F-box domain occupies 1–49 (MDRISNLPDEIICHIGSFLSAREAAFTTVLSKRWHNLFTIVPDLHFDSS). LRR repeat units lie at residues 53–79 (GESL…SLKW), 147–174 (LSLG…SLYH), 177–202 (FYEF…TVCG), 229–254 (WDAF…YYSD), 283–310 (WGKG…NLYT), and 337–362 (LSNF…NIDG).

The protein is F-box/LRR-repeat protein At3g62440 of Arabidopsis thaliana (Mouse-ear cress).